The chain runs to 608 residues: Threonine--tRNA ligase (608 aa).

An editing domain region spans residues 1 to 143; the sequence is MRVLYIHAER…VFKPEEAKTE (143 aa). Catalytic stretches follow at residues 194–490 and 195–490; these read PKYL…PRLP and KYLD…PRLP. Residues Cys287, His338, and His459 each coordinate Zn(2+).

This sequence belongs to the class-II aminoacyl-tRNA synthetase family. In terms of assembly, homodimer. Zn(2+) serves as cofactor.

The protein localises to the cytoplasm. The catalysed reaction is tRNA(Thr) + L-threonine + ATP = L-threonyl-tRNA(Thr) + AMP + diphosphate + H(+). In terms of biological role, catalyzes the attachment of threonine to tRNA(Thr) in a two-step reaction: L-threonine is first activated by ATP to form Thr-AMP and then transferred to the acceptor end of tRNA(Thr). Also edits incorrectly charged L-seryl-tRNA(Thr). This chain is Threonine--tRNA ligase, found in Pyrobaculum arsenaticum (strain DSM 13514 / JCM 11321 / PZ6).